Consider the following 625-residue polypeptide: Dual specificity protein phosphatase 8 (625 aa).

The Rhodanese domain occupies 23 to 138 (GPGGPLVIDS…FSSCFPGLCE (116 aa)). In terms of domain architecture, Tyrosine-protein phosphatase spans 160 to 302 (GLTRILPHLY…LLEYERSLKL (143 aa)). Cys-246 acts as the Phosphocysteine intermediate in catalysis. Residues 306 to 586 (LQGDPGTPSG…PAPETQFKRR (281 aa)) are disordered. Residues 380–389 (SSDRLQDTNR) show a composition bias toward basic and acidic residues. Residues 431 to 448 (AALGLSSPSPDSPDAAPE) are compositionally biased toward low complexity. The segment covering 555 to 570 (DLRRREAARAEPRDAR) has biased composition (basic and acidic residues).

This sequence belongs to the protein-tyrosine phosphatase family. Non-receptor class dual specificity subfamily. As to quaternary structure, monomer. As to expression, abundant in brain, heart and skeletal muscle.

The protein localises to the cytoplasm. The protein resides in the nucleus. The enzyme catalyses O-phospho-L-tyrosyl-[protein] + H2O = L-tyrosyl-[protein] + phosphate. The catalysed reaction is O-phospho-L-seryl-[protein] + H2O = L-seryl-[protein] + phosphate. It carries out the reaction O-phospho-L-threonyl-[protein] + H2O = L-threonyl-[protein] + phosphate. Has phosphatase activity with synthetic phosphatase substrates and negatively regulates mitogen-activated protein kinase activity, presumably by catalysing their dephosphorylation. Expected to display protein phosphatase activity toward phosphotyrosine, phosphoserine and phosphothreonine residues. This chain is Dual specificity protein phosphatase 8 (DUSP8), found in Homo sapiens (Human).